The following is a 110-amino-acid chain: DNA-binding protein Pars_1791 (110 aa).

The protein belongs to the PDCD5 family.

This chain is DNA-binding protein Pars_1791, found in Pyrobaculum arsenaticum (strain DSM 13514 / JCM 11321 / PZ6).